The primary structure comprises 143 residues: Transcription antitermination protein NusB (143 aa).

It belongs to the NusB family.

Involved in transcription antitermination. Required for transcription of ribosomal RNA (rRNA) genes. Binds specifically to the boxA antiterminator sequence of the ribosomal RNA (rrn) operons. This chain is Transcription antitermination protein NusB, found in Desulfatibacillum aliphaticivorans.